Reading from the N-terminus, the 299-residue chain is MTTMTTNTRRTVWRTVWREIHVSWLFIRSDRWTTLFPATCFVLAAAVHTRLPPAETAVAVASGVLYFWLFVYEHTLANQLVGLEEDRVNKPLRPLVSGRSSVRGARLRLIAVRVAFPLYGWFLGVLEWALLWQVLSLLQHEGGWGRHWLGRNLYAGIGVVAQLAAAWEIVAPVTPDAWRWIVTLTITVTLLMSVQDLRDITGDRAVGRSTMPLVFGERNTRVFLCAGFALGPLAIHHFLMAPAGPHWWIVATDVVLGGLSLLLAFRVVLRRGQRSDQHTYRLVEQWYTLALAASLYTLR.

7 helical membrane-spanning segments follow: residues 32–49 (WTTLFPATCFVLAAAVHT), 56–72 (TAVAVASGVLYFWLFVY), 110–132 (IAVRVAFPLYGWFLGVLEWALLW), 153–171 (LYAGIGVVAQLAAAWEIVA), 177–194 (AWRWIVTLTITVTLLMSV), 222–241 (VFLCAGFALGPLAIHHFLMA), and 247–269 (WWIVATDVVLGGLSLLLAFRVVL).

This sequence belongs to the UbiA prenyltransferase family. Mg(2+) serves as cofactor.

The protein localises to the cell membrane. It catalyses the reaction (2E,6E,10E,14E)-geranylfarnesyl diphosphate = somaliensene A + diphosphate. It carries out the reaction (2E,6E,10E,14E)-geranylfarnesyl diphosphate = (-)-somaliensene B + diphosphate. The protein operates within secondary metabolite biosynthesis; terpenoid biosynthesis. Functionally, sesterterpene cyclase, which converts geranylfarnesyl diphosphate (GFPP) into the terpenes somaliensene A and somaliensene B. The sequence is that of Somaliensene A/B synthase from Streptomyces somaliensis (strain ATCC 33201 / DSM 40738 / JCM 12659 / KCTC 9044 / NCTC 11332 / NRRL B-12077 / IP 733).